The primary structure comprises 487 residues: Argininosuccinate lyase (487 aa).

It belongs to the lyase 1 family. Argininosuccinate lyase subfamily.

It localises to the cytoplasm. The enzyme catalyses 2-(N(omega)-L-arginino)succinate = fumarate + L-arginine. Its pathway is amino-acid biosynthesis; L-arginine biosynthesis; L-arginine from L-ornithine and carbamoyl phosphate: step 3/3. The protein is Argininosuccinate lyase of Methanothrix thermoacetophila (strain DSM 6194 / JCM 14653 / NBRC 101360 / PT) (Methanosaeta thermophila).